We begin with the raw amino-acid sequence, 363 residues long: Protein-arginine kinase (363 aa).

One can recognise a Phosphagen kinase C-terminal domain in the interval 24-254 (IVLSSRIRLA…AQLIEQERSA (231 aa)). ATP contacts are provided by residues 27–31 (SSRIR), His-92, Arg-125, 176–180 (RASVM), and 207–212 (RGIYGE). Residues 337–342 (RDIRRA) carry the RDXXRA motif of the pArg binding pocket involved in allosteric regulation motif.

Belongs to the ATP:guanido phosphotransferase family.

It catalyses the reaction L-arginyl-[protein] + ATP = N(omega)-phospho-L-arginyl-[protein] + ADP + H(+). Appears to be allosterically activated by the binding of pArg-containing polypeptides to the pArg-binding pocket localized in the C-terminal domain of McsB. In terms of biological role, catalyzes the specific phosphorylation of arginine residues in a large number of proteins. Is part of the bacterial stress response system. Protein arginine phosphorylation has a physiologically important role and is involved in the regulation of many critical cellular processes, such as protein homeostasis, motility, competence, and stringent and stress responses, by regulating gene expression and protein activity. This Bacillus licheniformis (strain ATCC 14580 / DSM 13 / JCM 2505 / CCUG 7422 / NBRC 12200 / NCIMB 9375 / NCTC 10341 / NRRL NRS-1264 / Gibson 46) protein is Protein-arginine kinase.